The chain runs to 314 residues: MASYASEVKKELTQLEVHPEHARAELAALIRMNGSLSLMNHQFVLNVQTENPAIARRIYSLLKQNYQVESELLVRRKMKLKKNNQYIVRLKYDTNTVLNDLNIVAEDGFTIHTRVSEDIIDEDQRVRSYLRGAFLAGGSVNNPETSRYHLEIYSLYEEHNQDIVRMMNRFGLNAKTTVRRSGYITYLKEAEKIADFLQVIGATNAMLKFEDIRIVRDMRNSVNRLVNCETANLNKTIDAAAKQIENIEYLRDSVGLDNLPAKLREIALLRLEFPDITLKELGEKMPSGAISKSGINHRLRKLNQLAEGYQQKVI.

Positions 277–311 form a DNA-binding region, H-T-H motif; the sequence is TLKELGEKMPSGAISKSGINHRLRKLNQLAEGYQQ.

It belongs to the WhiA family.

Involved in cell division and chromosome segregation. In Latilactobacillus sakei subsp. sakei (strain 23K) (Lactobacillus sakei subsp. sakei), this protein is Probable cell division protein WhiA.